The following is a 102-amino-acid chain: MAQKKIRIRLKAYEHRILDQSAEKIVETAKRTGAEIAGPIPLPTERTLYTILRSPHKHKDSREQFEMRTHKRLIDIVNPTDKTVDALRKLELPSGVAIEIKL.

This sequence belongs to the universal ribosomal protein uS10 family. As to quaternary structure, part of the 30S ribosomal subunit.

Its function is as follows. Involved in the binding of tRNA to the ribosomes. This is Small ribosomal subunit protein uS10 from Leuconostoc citreum (strain KM20).